Here is a 681-residue protein sequence, read N- to C-terminus: Cell cycle checkpoint protein RAD17 (681 aa).

The RAD1-binding motif signature appears at 17-25 (DWVDPSFDD). Positions 42–61 (VNNSSHRRKNGPSTLESSRF) are disordered. T55 carries the post-translational modification Phosphothreonine. A phosphoserine mark is found at S71 and S86. 137 to 144 (GPPGCGKT) contacts ATP. Disordered stretches follow at residues 344–377 (SSKG…KPDR) and 606–681 (HGMI…SDGT). A Phosphoserine modification is found at S359. The interaction with MCM7 stretch occupies residues 432–681 (LVEPEEVVEM…IIEDYESDGT (250 aa)). The span at 631 to 662 (EPTQATVPETWSLPLSQNSASELPASQPQPFS) shows a compositional bias: polar residues. Phosphothreonine; by ATM is present on T633. Residues S646 and S656 each carry the phosphoserine; by ATR and ATM modification. Residues 666 to 681 (DMEENIIIEDYESDGT) show a composition bias toward acidic residues.

It belongs to the rad17/RAD24 family. Part of a DNA-binding complex containing RFC2, RFC3, RFC4 and RFC5. Interacts with RAD1 and RAD9 within the 9-1-1 (RAD1-RAD9-HUS1) complex. Interacts with RAD9B, POLE, SNU13 and MCM7. DNA damage promotes interaction with ATR or ATM and disrupts interaction with the 9-1-1 (RAD1-RAD9-HUS1) complex. Interacts (when phosphorylated) with NBN; promoting recruitment of the MRN complex to DNA damage sites. In terms of processing, phosphorylation on Ser-646 and Ser-656 is cell cycle-regulated, enhanced by genotoxic stress, and required for activation of checkpoint signaling. Phosphorylation is mediated by ATR upon UV or replication arrest, whereas it may be mediated both by ATR and ATM upon ionizing radiation. Phosphorylation on both sites is required for interaction with RAD1 but dispensable for interaction with RFC3 or RFC4. Phosphorylation at Thr-633 by ATM in response to DNA damage promotes interaction with NBN and recruitment of the MRN complex to DNA damage sites. In terms of tissue distribution, overexpressed in various cancer cell lines and in colon carcinoma (at protein level). Isoform 2 and isoform 3 are the most abundant isoforms in non irradiated cells (at protein level). Ubiquitous at low levels. Highly expressed in testis, where it is expressed within the germinal epithelium of the seminiferous tubuli. Weakly expressed in seminomas (testicular tumors).

It localises to the nucleus. Its subcellular location is the chromosome. Functionally, essential for sustained cell growth, maintenance of chromosomal stability, and ATR-dependent checkpoint activation upon DNA damage. Has a weak ATPase activity required for binding to chromatin. Participates in the recruitment of the 9-1-1 (RAD1-RAD9-HUS1) complex and RHNO1 onto chromatin, and in CHEK1 activation. Involved in homologous recombination by mediating recruitment of the MRN complex to DNA damage sites. May also serve as a sensor of DNA replication progression. The protein is Cell cycle checkpoint protein RAD17 of Homo sapiens (Human).